Consider the following 426-residue polypeptide: Enolase (426 aa).

Glutamine 163 contacts (2R)-2-phosphoglycerate. The Proton donor role is filled by glutamate 205. Aspartate 242, glutamate 283, and aspartate 310 together coordinate Mg(2+). Residues lysine 335, arginine 364, serine 365, and lysine 386 each coordinate (2R)-2-phosphoglycerate. Lysine 335 functions as the Proton acceptor in the catalytic mechanism.

Belongs to the enolase family. It depends on Mg(2+) as a cofactor.

The protein resides in the cytoplasm. It localises to the secreted. Its subcellular location is the cell surface. It catalyses the reaction (2R)-2-phosphoglycerate = phosphoenolpyruvate + H2O. Its pathway is carbohydrate degradation; glycolysis; pyruvate from D-glyceraldehyde 3-phosphate: step 4/5. Its function is as follows. Catalyzes the reversible conversion of 2-phosphoglycerate (2-PG) into phosphoenolpyruvate (PEP). It is essential for the degradation of carbohydrates via glycolysis. This Clavibacter sepedonicus (Clavibacter michiganensis subsp. sepedonicus) protein is Enolase.